A 240-amino-acid polypeptide reads, in one-letter code: Glutathione S-transferase omega-1 (240 aa).

The residue at position 2 (Ser-2) is an N-acetylserine. A GST N-terminal domain is found at 22-101 (GQIRVYSMRF…YLDEAYPEKK (80 aa)). The active-site Nucleophile is the Cys-32. At Lys-57 the chain carries N6-acetyllysine. Residues Lys-59, Val-72, and 85 to 86 (ES) contribute to the glutathione site. In terms of domain architecture, GST C-terminal spans 106–227 (DPYKKARQKM…AKTYREYLNL (122 aa)). At Ser-129 the chain carries Phosphoserine. The residue at position 152 (Lys-152) is an N6-acetyllysine.

This sequence belongs to the GST superfamily. Omega family. As to quaternary structure, homodimer.

The protein localises to the cytoplasm. Its subcellular location is the cytosol. It catalyses the reaction RX + glutathione = an S-substituted glutathione + a halide anion + H(+). It carries out the reaction L-dehydroascorbate + 2 glutathione = glutathione disulfide + L-ascorbate. The enzyme catalyses methylarsonate + 2 glutathione + H(+) = methylarsonous acid + glutathione disulfide + H2O. Exhibits glutathione-dependent thiol transferase and dehydroascorbate reductase activities. Has S-(phenacyl)glutathione reductase activity. Also has glutathione S-transferase activity. Participates in the biotransformation of inorganic arsenic and reduces monomethylarsonic acid (MMA) and dimethylarsonic acid. The chain is Glutathione S-transferase omega-1 (Gsto1) from Mus musculus (Mouse).